The chain runs to 430 residues: Adenylosuccinate synthetase (430 aa).

GTP contacts are provided by residues 12-18 (GDEGKGK) and 40-42 (GHT). Catalysis depends on Asp-13, which acts as the Proton acceptor. Mg(2+) is bound by residues Asp-13 and Gly-40. Residues 13 to 16 (DEGK), 38 to 41 (NAGH), Thr-128, Arg-142, Gln-223, Thr-238, and Arg-302 contribute to the IMP site. His-41 acts as the Proton donor in catalysis. 298–304 (TTTGRPR) is a binding site for substrate. Residues Arg-304, 330 to 332 (SID), and 412 to 414 (SVG) each bind GTP.

The protein belongs to the adenylosuccinate synthetase family. Homodimer. Mg(2+) serves as cofactor.

It localises to the cytoplasm. It catalyses the reaction IMP + L-aspartate + GTP = N(6)-(1,2-dicarboxyethyl)-AMP + GDP + phosphate + 2 H(+). The protein operates within purine metabolism; AMP biosynthesis via de novo pathway; AMP from IMP: step 1/2. In terms of biological role, plays an important role in the de novo pathway of purine nucleotide biosynthesis. Catalyzes the first committed step in the biosynthesis of AMP from IMP. This chain is Adenylosuccinate synthetase, found in Streptococcus gordonii (strain Challis / ATCC 35105 / BCRC 15272 / CH1 / DL1 / V288).